A 340-amino-acid polypeptide reads, in one-letter code: Diacylglycerol acyltransferase/mycolyltransferase Ag85C (340 aa).

The N-terminal stretch at 1–45 (MTFFEQVRRLRSAATTLPRRLAIAAMGAVLVYGLVGTFGGPATAG) is a signal peptide. 86-87 (LR) lines the substrate pocket. Positions 102-112 (FEEYYQSGLSV) are fibronectin-binding. Residues Ser-170 and Asn-198 each contribute to the substrate site. Ser-170 functions as the Nucleophile in the catalytic mechanism. The active site involves Glu-274. Substrate-binding positions include 276–279 (LTLR) and 306–308 (HSW). His-306 is a catalytic residue.

This sequence belongs to the mycobacterial A85 antigen family. Homodimer.

Its subcellular location is the secreted. The catalysed reaction is an acyl-CoA + a 1,2-diacyl-sn-glycerol = a triacyl-sn-glycerol + CoA. The enzyme catalyses 2 alpha,alpha'-trehalose 6-mycolate = alpha,alpha'-trehalose 6,6'-bismycolate + alpha,alpha-trehalose. In terms of biological role, the antigen 85 proteins (FbpA, FbpB, FbpC) are responsible for the high affinity of mycobacteria to fibronectin, a large adhesive glycoprotein, which facilitates the attachment of M.tuberculosis to murine alveolar macrophages (AMs). They also help to maintain the integrity of the cell wall by catalyzing the transfer of mycolic acids to cell wall arabinogalactan and through the synthesis of alpha,alpha-trehalose dimycolate (TDM, cord factor). They catalyze the transfer of a mycoloyl residue from one molecule of alpha,alpha-trehalose monomycolate (TMM) to another TMM, leading to the formation of TDM. The chain is Diacylglycerol acyltransferase/mycolyltransferase Ag85C (fbpC) from Mycobacterium bovis (strain ATCC BAA-935 / AF2122/97).